The chain runs to 496 residues: Glutamate--tRNA ligase (496 aa).

Positions 11-21 (PSPTGLLHIGN) match the 'HIGH' region motif. Residues 255–259 (KLSKR) carry the 'KMSKS' region motif. Lysine 258 is a binding site for ATP.

Belongs to the class-I aminoacyl-tRNA synthetase family. Glutamate--tRNA ligase type 1 subfamily. Monomer.

The protein localises to the cytoplasm. It carries out the reaction tRNA(Glu) + L-glutamate + ATP = L-glutamyl-tRNA(Glu) + AMP + diphosphate. Functionally, catalyzes the attachment of glutamate to tRNA(Glu) in a two-step reaction: glutamate is first activated by ATP to form Glu-AMP and then transferred to the acceptor end of tRNA(Glu). The protein is Glutamate--tRNA ligase of Streptococcus pyogenes serotype M49 (strain NZ131).